Here is a 662-residue protein sequence, read N- to C-terminus: PAN2-PAN3 deadenylation complex subunit PAN3 (662 aa).

Disordered stretches follow at residues 1–29 (MASA…NAKD) and 53–133 (DPHK…DTVT). The segment at 26 to 55 (NAKDTLCRNITIYGRCRYEDKGCAFNHDPH) adopts a C3H1-type zinc-finger fold. The segment covering 75–102 (SFTPSLLSSNGSSPTSTPATTKKMTTIS) has biased composition (low complexity). Residues 115–133 (SVVSRSNASTPGLRQDTVT) show a composition bias toward polar residues. The pseudokinase domain stretch occupies residues 263-525 (QTLPNTQLPA…NIDVFITGIS (263 aa)). ATP is bound by residues R315, 364–371 (DYHPLSKT), and 425–426 (SK). Positions 526 to 564 (SQLMSTFDSALHLDDQLTSDLSRELENGRLVRLMAKLNF) form a coiled coil. Residues 565-662 (VNERPEYEHD…ALMKPARRMH (98 aa)) form a knob domain region.

This sequence belongs to the protein kinase superfamily. PAN3 family. In terms of assembly, homodimer. Forms a heterotrimer with a catalytic subunit pan2 to form the poly(A)-nuclease (PAN) deadenylation complex. Interacts (via PAM-2 motif) with poly(A)-binding protein pab1 (via PABC domain), conferring substrate specificity of the enzyme complex.

The protein resides in the cytoplasm. Its function is as follows. Regulatory subunit of the poly(A)-nuclease (PAN) deadenylation complex, one of two cytoplasmic mRNA deadenylases involved in mRNA turnover. PAN specifically shortens poly(A) tails of RNA and the activity is stimulated by poly(A)-binding protein pab1. PAN deadenylation is followed by rapid degradation of the shortened mRNA tails by the CCR4-NOT complex. Deadenylated mRNAs are then degraded by two alternative mechanisms, namely exosome-mediated 3'-5' exonucleolytic degradation, or deadenylation-dependent mRNA decaping and subsequent 5'-3' exonucleolytic degradation by xrn1. May also be involved in post-transcriptional maturation of mRNA poly(A) tails. pan3 acts as a positive regulator for PAN activity, recruiting the catalytic subunit pan2 to mRNA via its interaction with RNA and with pab1. This is PAN2-PAN3 deadenylation complex subunit PAN3 from Aspergillus fumigatus (strain ATCC MYA-4609 / CBS 101355 / FGSC A1100 / Af293) (Neosartorya fumigata).